The sequence spans 232 residues: Protein FAM228B (232 aa).

The protein belongs to the FAM228 family.

In Mus musculus (Mouse), this protein is Protein FAM228B (Fam228b).